Here is a 486-residue protein sequence, read N- to C-terminus: Glutamyl-tRNA(Gln) amidotransferase subunit A (486 aa).

Catalysis depends on charge relay system residues Lys-79 and Ser-154. Ser-178 (acyl-ester intermediate) is an active-site residue.

This sequence belongs to the amidase family. GatA subfamily. Heterotrimer of A, B and C subunits.

The enzyme catalyses L-glutamyl-tRNA(Gln) + L-glutamine + ATP + H2O = L-glutaminyl-tRNA(Gln) + L-glutamate + ADP + phosphate + H(+). Functionally, allows the formation of correctly charged Gln-tRNA(Gln) through the transamidation of misacylated Glu-tRNA(Gln) in organisms which lack glutaminyl-tRNA synthetase. The reaction takes place in the presence of glutamine and ATP through an activated gamma-phospho-Glu-tRNA(Gln). The sequence is that of Glutamyl-tRNA(Gln) amidotransferase subunit A from Dehalococcoides mccartyi (strain ATCC BAA-2266 / KCTC 15142 / 195) (Dehalococcoides ethenogenes (strain 195)).